The chain runs to 234 residues: Sugar fermentation stimulation protein A (234 aa).

The H-T-H motif DNA-binding region spans 201 to 220 (LLSEAQNKGVEVLAYKAELS).

It belongs to the SfsA family.

Its function is as follows. Binds to DNA non-specifically. Could be a regulatory factor involved in maltose metabolism. This is Sugar fermentation stimulation protein A from Salmonella typhi.